The sequence spans 185 residues: Der GTPase-activating protein YihI (185 aa).

Disordered stretches follow at residues 1-74 (MGRS…KKKI) and 145-169 (EPED…SSDE). Over residues 23–33 (NRSESDVEGRE) the composition is skewed to basic and acidic residues. Basic residues predominate over residues 34 to 47 (RKRVKKRKGLKSGS). Basic and acidic residues predominate over residues 48-68 (RHSDGSEAKQRKAALARDPRL). Positions 145 to 155 (EPEDDEEEIFE) are enriched in acidic residues.

This sequence belongs to the YihI family. As to quaternary structure, interacts with Der.

Its function is as follows. A GTPase-activating protein (GAP) that modifies Der/EngA GTPase function. May play a role in ribosome biogenesis. This is Der GTPase-activating protein YihI from Vibrio atlanticus (strain LGP32) (Vibrio splendidus (strain Mel32)).